The primary structure comprises 211 residues: Thymidylate kinase (211 aa).

7-14 (GIDGCGKT) is a binding site for ATP.

It belongs to the thymidylate kinase family.

It carries out the reaction dTMP + ATP = dTDP + ADP. In terms of biological role, phosphorylation of dTMP to form dTDP in both de novo and salvage pathways of dTTP synthesis. The chain is Thymidylate kinase from Anaplasma marginale (strain St. Maries).